We begin with the raw amino-acid sequence, 183 residues long: Holliday junction branch migration complex subunit RuvA (183 aa).

The segment at 1–63 is domain I; the sequence is MIVGLIGVVE…EDAHLLYGFL (63 aa). A domain II region spans residues 64 to 141; it reads EEGEKILFER…IQDETKPMHN (78 aa). A region of interest (flexible linker) is located at residue N141. Residues 141–183 form a domain III region; the sequence is NEVFLALESLGFKSAEINKVLKTLKPSLSIEAAIKEALQQLRS.

The protein belongs to the RuvA family. In terms of assembly, homotetramer. Forms an RuvA(8)-RuvB(12)-Holliday junction (HJ) complex. HJ DNA is sandwiched between 2 RuvA tetramers; dsDNA enters through RuvA and exits via RuvB. An RuvB hexamer assembles on each DNA strand where it exits the tetramer. Each RuvB hexamer is contacted by two RuvA subunits (via domain III) on 2 adjacent RuvB subunits; this complex drives branch migration. In the full resolvosome a probable DNA-RuvA(4)-RuvB(12)-RuvC(2) complex forms which resolves the HJ.

Its subcellular location is the cytoplasm. Its function is as follows. The RuvA-RuvB-RuvC complex processes Holliday junction (HJ) DNA during genetic recombination and DNA repair, while the RuvA-RuvB complex plays an important role in the rescue of blocked DNA replication forks via replication fork reversal (RFR). RuvA specifically binds to HJ cruciform DNA, conferring on it an open structure. The RuvB hexamer acts as an ATP-dependent pump, pulling dsDNA into and through the RuvAB complex. HJ branch migration allows RuvC to scan DNA until it finds its consensus sequence, where it cleaves and resolves the cruciform DNA. This is Holliday junction branch migration complex subunit RuvA from Helicobacter pylori (strain G27).